The primary structure comprises 106 residues: Large ribosomal subunit protein P2A (106 aa).

Lysine 2 participates in a covalent cross-link: Glycyl lysine isopeptide (Lys-Gly) (interchain with G-Cter in ubiquitin). Phosphothreonine is present on threonine 16. Phosphoserine is present on residues serine 40 and serine 43. Residue lysine 48 forms a Glycyl lysine isopeptide (Lys-Gly) (interchain with G-Cter in ubiquitin) linkage. A Phosphoserine modification is found at serine 49. Positions 65–82 (PAAGPASAGGAAAASGDA) are enriched in low complexity. Positions 65 to 106 (PAAGPASAGGAAAASGDAAAEEEKEEEAAEESDDDMGFGLFD) are disordered. The segment covering 83–100 (AAEEEKEEEAAEESDDDM) has biased composition (acidic residues). Serine 96 bears the Phosphoserine mark.

This sequence belongs to the eukaryotic ribosomal protein P1/P2 family. Component of the large ribosomal subunit (LSU). Mature yeast ribosomes consist of a small (40S) and a large (60S) subunit. The 40S small subunit contains 1 molecule of ribosomal RNA (18S rRNA) and 33 different proteins (encoded by 57 genes). The large 60S subunit contains 3 rRNA molecules (25S, 5.8S and 5S rRNA) and 46 different proteins (encoded by 81 genes). The 5 acidic ribosomal P-proteins form the stalk structure of the 60S subunit. They are organized as a pentameric complex in which uL10/P0 interacts with 2 heterodimers, P1A-P2B and P1B-P2A. Post-translationally, phosphorylation is not involved in the interaction of the acidic P proteins with the ribosome, however it is suggested to affect the ribosome activity and to participate in a possible ribosome regulatory mechanism. In terms of processing, the N-terminus is not modified.

It is found in the cytoplasm. Its function is as follows. Component of the ribosome, a large ribonucleoprotein complex responsible for the synthesis of proteins in the cell. The small ribosomal subunit (SSU) binds messenger RNAs (mRNAs) and translates the encoded message by selecting cognate aminoacyl-transfer RNA (tRNA) molecules. The large subunit (LSU) contains the ribosomal catalytic site termed the peptidyl transferase center (PTC), which catalyzes the formation of peptide bonds, thereby polymerizing the amino acids delivered by tRNAs into a polypeptide chain. The nascent polypeptides leave the ribosome through a tunnel in the LSU and interact with protein factors that function in enzymatic processing, targeting, and the membrane insertion of nascent chains at the exit of the ribosomal tunnel. The protein is Large ribosomal subunit protein P2A of Saccharomyces cerevisiae (strain ATCC 204508 / S288c) (Baker's yeast).